The following is a 171-amino-acid chain: Protein ups1 homolog (171 aa).

The tract at residues 1–79 is required for mitochondrial targeting; sequence MTAICTDKTE…LNVNKSYILE (79 aa). In terms of domain architecture, PRELI/MSF1 spans 2 to 171; it reads TAICTDKTEL…YVIQQKFQPS (170 aa).

It localises to the mitochondrion inner membrane. The protein resides in the mitochondrion intermembrane space. Required for maintenance of normal mitochondrial morphology as well as PCP1-dependent processing of MGM1. This chain is Protein ups1 homolog, found in Schizosaccharomyces pombe (strain 972 / ATCC 24843) (Fission yeast).